A 634-amino-acid chain; its full sequence is Threonine--tRNA ligase (634 aa).

The tract at residues 1–142 is editing domain; sequence MQLLLIHSDY…LSRSIRPEGA (142 aa). Residues 214–513 form a catalytic region; the sequence is PHVELMRRLE…TEEGKVPMLP (300 aa). Zn(2+) is bound by residues C306, H358, and H482.

It belongs to the class-II aminoacyl-tRNA synthetase family. As to quaternary structure, homodimer. The cofactor is Zn(2+).

It is found in the cytoplasm. It carries out the reaction tRNA(Thr) + L-threonine + ATP = L-threonyl-tRNA(Thr) + AMP + diphosphate + H(+). Functionally, catalyzes the attachment of threonine to tRNA(Thr) in a two-step reaction: L-threonine is first activated by ATP to form Thr-AMP and then transferred to the acceptor end of tRNA(Thr). Edits incorrectly charged L-seryl-tRNA(Thr) probably via its editing domain (tested with total bovine tRNA). Activates L-serine, but does not detectably transfer it to tRNA (tested with total bovine tRNA). The polypeptide is Threonine--tRNA ligase (Methanosarcina mazei (strain ATCC BAA-159 / DSM 3647 / Goe1 / Go1 / JCM 11833 / OCM 88) (Methanosarcina frisia)).